The chain runs to 789 residues: Cadherin-10 (789 aa).

Residues 1-22 form the signal peptide; the sequence is MTIQQVLLLLLLWMWLLHPCRT. Positions 23–54 are excised as a propeptide; it reads EMLFRRTPDLRPKGFVGRTSGSDGKALHRQKR. Cadherin domains lie at 55-160, 161-269, 270-384, 385-487, and 488-606; these read GWMW…EPTF, PEEI…PPRF, PQST…PPVF, SRSS…DNAP, and QFAV…LLLP. The Extracellular segment spans residues 55 to 606; the sequence is GWMWNQFFLL…SCNAEALLLP (552 aa). An N-linked (GlcNAc...) asparagine glycan is attached at N256. N-linked (GlcNAc...) asparagine glycosylation is found at N438, N456, and N534. The helical transmembrane segment at 607-634 threads the bilayer; the sequence is AGLSTGALIAILLCIIILLVIVVLFAAL. Topologically, residues 635–789 are cytoplasmic; the sequence is KRQRKKEPLI…GGGESDKDAS (155 aa).

The protein localises to the cell membrane. Cadherins are calcium-dependent cell adhesion proteins. They preferentially interact with themselves in a homophilic manner in connecting cells; cadherins may thus contribute to the sorting of heterogeneous cell types. The sequence is that of Cadherin-10 (CDH10) from Gallus gallus (Chicken).